Reading from the N-terminus, the 162-residue chain is Austinoid biosynthesis clusters protein J (162 aa).

Belongs to the trt14 isomerase family. As to quaternary structure, homodimer.

It functions in the pathway secondary metabolite biosynthesis; terpenoid biosynthesis. In terms of biological role, part of the gene cluster B that mediates the biosynthesis of austinol and dehydroaustinol, two fungal meroterpenoids. The first step of the pathway is the synthesis of 3,5-dimethylorsellinic acid by the polyketide synthase ausA. 3,5-dimethylorsellinic acid is then prenylated by the polyprenyl transferase ausN. Further epoxidation by the FAD-dependent monooxygenase ausM and cyclization by the probable terpene cyclase ausL lead to the formation of protoaustinoid A. Protoaustinoid A is then oxidized to spiro-lactone preaustinoid A3 by the combined action of the FAD-binding monooxygenases ausB and ausC, and the dioxygenase ausE. Acid-catalyzed keto-rearrangement and ring contraction of the tetraketide portion of preaustinoid A3 by ausJ lead to the formation of preaustinoid A4. The aldo-keto reductase ausK, with the help of ausH, is involved in the next step by transforming preaustinoid A4 into isoaustinone which is in turn hydroxylated by the P450 monooxygenase ausI to form austinolide. Finally, the cytochrome P450 monooxygenase ausG modifies austinolide to austinol. Austinol can be further modified to dehydroaustinol which forms a diffusible complex with diorcinol that initiates conidiation. Due to genetic rearrangements of the clusters and the subsequent loss of some enzymes, the end products of the Emericella nidulans austinoid biosynthesis clusters are austinol and dehydroaustinol, even if additional enzymes, such as the O-acetyltransferase ausQ and the cytochrome P450 monooxygenase ausR are still functional. This Emericella nidulans (strain FGSC A4 / ATCC 38163 / CBS 112.46 / NRRL 194 / M139) (Aspergillus nidulans) protein is Austinoid biosynthesis clusters protein J.